We begin with the raw amino-acid sequence, 260 residues long: Spectinomycin 9-adenylyltransferase (260 aa).

The enzyme catalyses spectinomycin + ATP = 9-O-adenylylspectinomycin + diphosphate. Functionally, mediates bacterial resistance to the antibiotic spectinomycin but not streptomycin. The sequence is that of Spectinomycin 9-adenylyltransferase (ant1) from Staphylococcus aureus (strain Mu50 / ATCC 700699).